We begin with the raw amino-acid sequence, 184 residues long: ADP-ribosylation factor-like protein 3 (184 aa).

G2 carries the N-myristoyl glycine lipid modification. Residues 24–31, 68–72, and 127–130 each bind GTP; these read GLDNAGKT, DIGGQ, and NKQD.

It belongs to the small GTPase superfamily. Arf family.

It localises to the golgi apparatus. GTP-binding protein that may be involved in protein trafficking; may modulate vesicle budding and uncoating within the Golgi apparatus. The polypeptide is ADP-ribosylation factor-like protein 3 (arl-3) (Caenorhabditis elegans).